Here is a 226-residue protein sequence, read N- to C-terminus: Urease accessory protein UreF (226 aa).

Belongs to the UreF family. As to quaternary structure, ureD, UreF and UreG form a complex that acts as a GTP-hydrolysis-dependent molecular chaperone, activating the urease apoprotein by helping to assemble the nickel containing metallocenter of UreC. The UreE protein probably delivers the nickel.

It localises to the cytoplasm. Its function is as follows. Required for maturation of urease via the functional incorporation of the urease nickel metallocenter. The protein is Urease accessory protein UreF of Corynebacterium glutamicum (strain R).